The primary structure comprises 252 residues: Ribosomal RNA small subunit methyltransferase NEP1 (252 aa).

Residues L180, G207, 212–214, and 227–232 contribute to the S-adenosyl-L-methionine site; these read GKD and LSNYPL.

The protein belongs to the class IV-like SAM-binding methyltransferase superfamily. RNA methyltransferase NEP1 family. In terms of assembly, homodimer. Interacts with snoRNA U3. Interacts with NOP14 and MPP10. Component of the ribosomal small subunit (SSU) processome composed of at least 40 protein subunits and snoRNA U3.

It localises to the nucleus. The protein localises to the nucleolus. It catalyses the reaction pseudouridine(1191) in yeast 18S rRNA + S-adenosyl-L-methionine = N(1)-methylpseudouridine(1191) in yeast 18S rRNA + S-adenosyl-L-homocysteine + H(+). S-adenosyl-L-methionine-dependent pseudouridine N(1)-methyltransferase that methylates pseudouridine at position 1189 (Psi1189) in 18S rRNA. Involved the biosynthesis of the hypermodified N1-methyl-N3-(3-amino-3-carboxypropyl) pseudouridine (m1acp3-Psi) conserved in eukaryotic 18S rRNA. N1-methylation is independent on acp-modification at the N3-position of U1191. Also has an essential role in 40S ribosomal subunit biogenesis independent on its methyltransferase activity, facilitating the incorporation of ribosomal protein S19 (RPS19A/RPS19B) during the formation of pre-ribosomes. The chain is Ribosomal RNA small subunit methyltransferase NEP1 from Saccharomyces cerevisiae (strain ATCC 204508 / S288c) (Baker's yeast).